The following is an 830-amino-acid chain: MDISVFEWKKVDLFNIIVVPFVKIPNTAEISCYCFPESKSSTEERNIKLVICDKNRNILIYLSNWECITFKSPSTRKAIALCSLTSNNSLATVTPDINNGIHIDIFDLNRLTKKQAAPIIASAYTQPSSTPLCLNADVIDDKLFALAIGLGNGDILLHYGKITKNFSANIRQHTVSGNAVNGIHFDFKTQPLDTTQIMFVTCVQGVYCFMLKEKCIMDTKFVLDNDKGNLNYRSIMCKAGGGEINDSMLVVGRADAVYCYTPEGRGPCFAIEGAKECLAWVGHYLIVGVKNSNLKQNATTLIVLDTENKIIVFQRQFQELFYVISENNFCYIVTNSGDTDACNMLMLEKNSIDVNIRLLVEKHMYNIALRLLHREGYTSSPETALVRFQYGNHLLQKGDFSRATQEFIKTIGFIKPYAVISKLLYSRYNTYLLNYLTEWKKKNESSSCHTRLIECCIKRDQIEHEMQQDDFKHYKSPAKIKHLATLSKMYFACTPSNQVPVEEEHLLHQLLEYGPASLAVDLTTYLNNITFENVKESKNILSFCSILADHNDYCAKMLAKIIEAFPVCDEKLLFYLLVFYFKLWRLDKVTSSFVSDFIKTHSLRMDKTIIVSRLYTFFNVTQRIHGHQKNTGTLHNETIDKCIENLIKNNPDVALNENLSKRSFLMMLKSSCSTEEIKAIKIKPIFKDRLLRSIVDSANELKLVENFNEKIKRSRSMLSLYTNNPIEFRNDKCDICREMLSMQSIYFLCQHSFHEECLNYKSTKRQEKFLCIICKTRNLLSPKHSSNFSCDSSDTIAVLAKIVSIGNKLETKLMIRGRQKSDGVTCNPFN.

The segment at 733–775 (CDICREMLSMQSIYFLCQHSFHEECLNYKSTKRQEKFLCIICK) adopts an RING-type; atypical zinc-finger fold.

Belongs to the VPS11 family. As to quaternary structure, part of the homotypic fusion and vacuole protein sorting (HOPS) complex, composed of Vps16A, car/Vps33A, dor/Vps18, Vps39, Vps11 and lt/Vps41. Unlike in other species, not part of the class C core vacuole/endosome tethering (CORVET) complex.

Its subcellular location is the late endosome membrane. The protein localises to the lysosome membrane. Its function is as follows. Part of the homotypic fusion and vacuole protein sorting (HOPS) tethering complex involved in endo-lysosomal vesicle trafficking and lysosome biogenesis, but unlike in many other species does not form part of the class C core vacuole/endosome tethering (CORVET) complex. The HOPS complex facilitates docking and fusion of lysosomes with late endosomes and several other types of vesicles. The HOPS complex is also involved in autophagy, pigment granule biogenesis and crinophagy (the elimination of unused secretory granules through fusion with lysosomes). The HOPS complex probably instigates autophagosome-lysosome fusion by binding autophagosome-associated Syx17/syntaxin 17 and promoting assembly of the trans-SNARE complex. Independent of Syx17/syntaxin 17, HOPS is involved in biosynthetic transport to lysosomes and lysosome-related organelles such as eye-pigment granules. Required for autophagocytosis-dependent remodeling of myofibrils and transverse-tubules (T-tubules) during metamorphosis. This is Vacuolar protein sorting-associated protein 11 homolog from Drosophila melanogaster (Fruit fly).